The following is a 1262-amino-acid chain: Tau-tubulin kinase homolog Asator (1262 aa).

Residues 13–35 are disordered; sequence NASAPDDGNQSCQPSSKQDQYLS. The segment covering 20–35 has biased composition (polar residues); sequence GNQSCQPSSKQDQYLS. One can recognise a Protein kinase domain in the interval 173-436; that stretch reads WKVVRKIGGG…MLIGLFERCM (264 aa). Residues 179–187 and Lys202 contribute to the ATP site; that span reads IGGGGFGEI. Residue Asp293 is the Proton acceptor of the active site. Disordered stretches follow at residues 662-724, 755-792, and 984-1003; these read TVTN…TSNA, RSAT…ARSS, and KDSA…SRHR. Positions 667–679 are enriched in basic and acidic residues; the sequence is KTSEVNRSTEEQK. Polar residues predominate over residues 755 to 776; sequence RSATSTNLRPSSSASQRINSGS.

The protein belongs to the protein kinase superfamily. CK1 Ser/Thr protein kinase family. As to quaternary structure, interacts with Mgtor. It depends on Mg(2+) as a cofactor. As to expression, detected in larval brain.

The protein resides in the cytoplasm. The protein localises to the cytoskeleton. It localises to the spindle. The catalysed reaction is L-seryl-[protein] + ATP = O-phospho-L-seryl-[protein] + ADP + H(+). It carries out the reaction L-threonyl-[protein] + ATP = O-phospho-L-threonyl-[protein] + ADP + H(+). Functionally, probable serine/threonine protein kinase. This Drosophila melanogaster (Fruit fly) protein is Tau-tubulin kinase homolog Asator.